Consider the following 53-residue polypeptide: Photoreceptor disk component PRCD (53 aa).

Cysteine 2 carries S-palmitoyl cysteine lipidation. The interval 24–53 (PEPSRVDGTVVGSGSDTDLQSTGREKGPVK) is disordered. The segment covering 35–45 (GSGSDTDLQST) has biased composition (polar residues).

Belongs to the PRCD family. Interacts with RHO/rhodopsin; the interaction promotes PRCD stability. In terms of processing, palmitoylated at Cys-2. Palmitoylation is essential for protein stability and trafficking to the photoreceptor outer segment, but does not appear to be essential for membrane localization. Probably palmitoylated by ZDHHC3. Phosphorylated. As to expression, expressed in retina, where it localizes to both rod and cone photoreceptors (at protein level).

It localises to the cell projection. It is found in the cilium. Its subcellular location is the photoreceptor outer segment. The protein localises to the membrane. The protein resides in the endoplasmic reticulum. It localises to the golgi apparatus. In terms of biological role, involved in vision. The sequence is that of Photoreceptor disk component PRCD from Mus musculus (Mouse).